The primary structure comprises 346 residues: Large ribosomal subunit protein uL3 (346 aa).

Residues 324-346 are disordered; it reads RPPKKKPPVERPQITYVSRESKQ.

The protein belongs to the universal ribosomal protein uL3 family. As to quaternary structure, part of the 50S ribosomal subunit. Forms a cluster with proteins L14 and L24e.

In terms of biological role, one of the primary rRNA binding proteins, it binds directly near the 3'-end of the 23S rRNA, where it nucleates assembly of the 50S subunit. The sequence is that of Large ribosomal subunit protein uL3 from Thermococcus kodakarensis (strain ATCC BAA-918 / JCM 12380 / KOD1) (Pyrococcus kodakaraensis (strain KOD1)).